A 421-amino-acid polypeptide reads, in one-letter code: Atrochrysone carboxyl ACP thioesterase (421 aa).

Zn(2+) contacts are provided by histidine 207, histidine 209, aspartate 211, and histidine 212. Aspartate 211 functions as the Proton donor/acceptor in the catalytic mechanism.

It belongs to the metallo-beta-lactamase superfamily. It depends on Zn(2+) as a cofactor. Specifically expressed in conidia.

The catalysed reaction is atrochrysone carboxyl-[ACP] + H2O = atrochrysone carboxylate + holo-[ACP] + H(+). Its pathway is secondary metabolite biosynthesis. Its function is as follows. Atrochrysone carboxyl ACP thioesterase; part of the gene cluster that mediates the biosynthesis of trypacidin, a mycotoxin with antiprotozoal activity and that plays a role in the infection process. The pathway begins with the synthesis of atrochrysone thioester by the polyketide synthase (PKS) tpcC. The atrochrysone carboxyl ACP thioesterase tpcB then breaks the thioester bond and releases the atrochrysone carboxylic acid from tpcC. The decarboxylase tpcK converts atrochrysone carboxylic acid to atrochrysone which is further reduced into emodin anthrone. The next step is performed by the emodin anthrone oxygenase tpcL that catalyzes the oxidation of emodin anthrone to emodin. Emodin O-methyltransferase encoded by tpcA catalyzes methylation of the 8-hydroxy group of emodin to form questin. Ring cleavage of questin by questin oxidase tpcI leads to desmethylsulochrin via several intermediates including questin epoxide. Another methylation step catalyzed by tpcM leads to the formation of sulochrin which is further converted to monomethylsulfochrin by tpcH. Finally, the tpcJ catalyzes the conversion of monomethylsulfochrin to trypacidin. Trypacidin is toxic for human pulmonary and bronchial epithelial cells by initiating the intracellular formation of nitric oxide (NO) and hydrogen peroxide (H(2)O(2)), thus triggering host necrotic cell death. The trypacidin pathway is also able to produce endocrocin via a distinct route from the endocrocin Enc pathway. The chain is Atrochrysone carboxyl ACP thioesterase from Aspergillus fumigatus (strain ATCC MYA-4609 / CBS 101355 / FGSC A1100 / Af293) (Neosartorya fumigata).